The sequence spans 384 residues: 1-deoxy-D-xylulose 5-phosphate reductoisomerase (384 aa).

Residues T10, G11, S12, I13, R37, N38, and N124 each contribute to the NADPH site. K125 is a binding site for 1-deoxy-D-xylulose 5-phosphate. Residue E126 coordinates NADPH. D150 provides a ligand contact to Mn(2+). Residues S151, E152, S176, and H199 each contribute to the 1-deoxy-D-xylulose 5-phosphate site. E152 contacts Mn(2+). Residue G205 participates in NADPH binding. 1-deoxy-D-xylulose 5-phosphate-binding residues include S212, N217, K218, and E221. Mn(2+) is bound at residue E221.

Belongs to the DXR family. It depends on Mg(2+) as a cofactor. Requires Mn(2+) as cofactor.

The enzyme catalyses 2-C-methyl-D-erythritol 4-phosphate + NADP(+) = 1-deoxy-D-xylulose 5-phosphate + NADPH + H(+). It participates in isoprenoid biosynthesis; isopentenyl diphosphate biosynthesis via DXP pathway; isopentenyl diphosphate from 1-deoxy-D-xylulose 5-phosphate: step 1/6. Its function is as follows. Catalyzes the NADPH-dependent rearrangement and reduction of 1-deoxy-D-xylulose-5-phosphate (DXP) to 2-C-methyl-D-erythritol 4-phosphate (MEP). This Clostridium perfringens (strain 13 / Type A) protein is 1-deoxy-D-xylulose 5-phosphate reductoisomerase.